A 248-amino-acid polypeptide reads, in one-letter code: 3,4-dihydroxyphthalate decarboxylase (248 aa).

Residue Glu90 is the Proton donor/acceptor of the active site. Residues Glu90, His109, His111, and His177 each coordinate a divalent metal cation.

This sequence belongs to the aldolase class II family. The cofactor is a divalent metal cation.

The enzyme catalyses 3,4-dihydroxyphthalate + H(+) = 3,4-dihydroxybenzoate + CO2. Its pathway is xenobiotic degradation; phthalate degradation. Catalyzes the decarboxylation of 3,4-dihydroxyphthalate to protocatechuate (3,4-dihydroxybenzoate) during phthalate metabolism. This Arthrobacter keyseri protein is 3,4-dihydroxyphthalate decarboxylase.